Consider the following 59-residue polypeptide: Anti-inflammatory peptide amregulin (59 aa).

An N-terminal signal peptide occupies residues 1-19; that stretch reads MKLHMLNMLNCLLLTVCDG.

Salivary glands.

The protein localises to the secreted. Anti-inflammatory peptide that may facilitate successful blood feeding of ticks and may lead to immunotolerance in its host. Inhibits the secretion of inflammatory factors in rat splenocytes, such as tumor necrosis factor-alpha (TNF), interleukin-1, interleukin-8 (CXCL8) and interferon-gamma (IFNG). In addition, shows strong free radical scavenging and antioxidant activities in vitro. In vivo, inhibits adjuvant-induced paw inflammation in mouse models. This is Anti-inflammatory peptide amregulin from Amblyomma variegatum (Tropical bont tick).